The chain runs to 271 residues: Aspartate/glutamate leucyltransferase (271 aa).

This sequence belongs to the R-transferase family. Bpt subfamily.

The protein resides in the cytoplasm. It catalyses the reaction N-terminal L-glutamyl-[protein] + L-leucyl-tRNA(Leu) = N-terminal L-leucyl-L-glutamyl-[protein] + tRNA(Leu) + H(+). The enzyme catalyses N-terminal L-aspartyl-[protein] + L-leucyl-tRNA(Leu) = N-terminal L-leucyl-L-aspartyl-[protein] + tRNA(Leu) + H(+). Functionally, functions in the N-end rule pathway of protein degradation where it conjugates Leu from its aminoacyl-tRNA to the N-termini of proteins containing an N-terminal aspartate or glutamate. The sequence is that of Aspartate/glutamate leucyltransferase from Acinetobacter baylyi (strain ATCC 33305 / BD413 / ADP1).